Reading from the N-terminus, the 333-residue chain is Type II secretion system protein K (333 aa).

Residues 1 to 7 constitute a propeptide, leader sequence; the sequence is MRRGQNG. The chain crosses the membrane as a helical span at residues 8–29; it reads VALITVLLVVAVVTIVCAGLII. The Periplasmic portion of the chain corresponds to 30–333; sequence RQQLAIRSSA…GGDDWKKDER (304 aa). The disordered stretch occupies residues 313 to 333; sequence MGQGGLPIPSTGGDDWKKDER.

The protein belongs to the GSP K family. In terms of assembly, type II secretion is composed of four main components: the outer membrane complex, the inner membrane complex, the cytoplasmic secretion ATPase and the periplasm-spanning pseudopilus. Interacts with the tip of the type II pseudopilus subunits XcpV, XcpU and XcpW. Interacts with core component XcpT. Cleaved by prepilin peptidase.

It localises to the cell inner membrane. In terms of biological role, component of the type II secretion system required for the energy-dependent secretion of extracellular factors such as proteases and toxins from the periplasm. Plays a role in pseudopilus assembly and seems to control its length. Interacts with the pseudopilus tip complex that is critical for the recognition and binding of secretion substrates. Type II pseudopilus confers increased bacterial adhesive capabilities. The polypeptide is Type II secretion system protein K (xcpX) (Pseudomonas aeruginosa (strain ATCC 15692 / DSM 22644 / CIP 104116 / JCM 14847 / LMG 12228 / 1C / PRS 101 / PAO1)).